We begin with the raw amino-acid sequence, 541 residues long: Arginine--tRNA ligase (541 aa).

The 'HIGH' region signature appears at 119–129 (ANPTGPLHIGH).

It belongs to the class-I aminoacyl-tRNA synthetase family. Monomer.

It is found in the cytoplasm. It carries out the reaction tRNA(Arg) + L-arginine + ATP = L-arginyl-tRNA(Arg) + AMP + diphosphate. The sequence is that of Arginine--tRNA ligase from Helicobacter pylori (strain Shi470).